Here is a 358-residue protein sequence, read N- to C-terminus: DNA polymerase IV (358 aa).

One can recognise a UmuC domain in the interval 4 to 185; the sequence is IIHIDMDCYF…LSLRKIPGVG (182 aa). The Mg(2+) site is built by Asp-8 and Asp-103. Residue Glu-104 is part of the active site.

Belongs to the DNA polymerase type-Y family. Monomer. The cofactor is Mg(2+).

It localises to the cytoplasm. The catalysed reaction is DNA(n) + a 2'-deoxyribonucleoside 5'-triphosphate = DNA(n+1) + diphosphate. In terms of biological role, poorly processive, error-prone DNA polymerase involved in untargeted mutagenesis. Copies undamaged DNA at stalled replication forks, which arise in vivo from mismatched or misaligned primer ends. These misaligned primers can be extended by PolIV. Exhibits no 3'-5' exonuclease (proofreading) activity. May be involved in translesional synthesis, in conjunction with the beta clamp from PolIII. This chain is DNA polymerase IV, found in Shewanella baltica (strain OS155 / ATCC BAA-1091).